We begin with the raw amino-acid sequence, 254 residues long: Type III pantothenate kinase (254 aa).

Position 6–13 (6–13 (DVGNSNIV)) interacts with ATP. Residues Tyr100 and 107 to 110 (GADR) contribute to the substrate site. Asp109 (proton acceptor) is an active-site residue. Asp129 is a binding site for K(+). Thr132 serves as a coordination point for ATP. Substrate is bound at residue Thr184.

The protein belongs to the type III pantothenate kinase family. Homodimer. NH4(+) is required as a cofactor. Requires K(+) as cofactor.

It localises to the cytoplasm. The catalysed reaction is (R)-pantothenate + ATP = (R)-4'-phosphopantothenate + ADP + H(+). The protein operates within cofactor biosynthesis; coenzyme A biosynthesis; CoA from (R)-pantothenate: step 1/5. In terms of biological role, catalyzes the phosphorylation of pantothenate (Pan), the first step in CoA biosynthesis. This Pelobacter propionicus (strain DSM 2379 / NBRC 103807 / OttBd1) protein is Type III pantothenate kinase.